The following is a 517-amino-acid chain: Nectin-1 (517 aa).

A signal peptide spans methionine 1–serine 30. An Ig-like V-type domain is found at glutamine 31–threonine 141. Residues glutamine 31–alanine 355 lie on the Extracellular side of the membrane. N-linked (GlcNAc...) asparagine glycans are attached at residues asparagine 36, asparagine 72, and asparagine 139. The cysteines at positions 51 and 124 are disulfide-linked. 2 consecutive Ig-like C2-type domains span residues tryptophan 149 to serine 238 and proline 247 to threonine 334. Disulfide bonds link cysteine 172–cysteine 226 and cysteine 269–cysteine 316. The N-linked (GlcNAc...) (complex) asparagine glycan is linked to asparagine 202. An interaction with FGFR region spans residues tryptophan 282–threonine 299. 4 N-linked (GlcNAc...) asparagine glycosylation sites follow: asparagine 286, asparagine 297, asparagine 307, and asparagine 332. The helical transmembrane segment at isoleucine 356–valine 376 threads the bilayer. The Cytoplasmic portion of the chain corresponds to alanine 377 to valine 517. The disordered stretch occupies residues glycine 399–tyrosine 488. Residues serine 422, serine 434, and serine 435 each carry the phosphoserine modification. Position 436 is a phosphotyrosine (tyrosine 436). Positions tyrosine 436–glycine 445 are enriched in acidic residues. Residues glycine 449–arginine 466 show a composition bias toward basic and acidic residues. Serine 511 carries the phosphoserine modification.

The protein belongs to the nectin family. Cis- and trans-homodimer. Can form trans-heterodimers with NECTIN3 and with NECTIN4. Interaction between NECTIN1 and NECTIN3 on the pre- and postsynaptic sites, respectively, initiates the formation of puncta adherentia junctions between axons and dendrites. Interacts (via cytoplasmic domain) with AFDN (via PDZ domain); this interaction recruits NECTIN1 to cadherin-based adherens junctions and provides a connection with the actin cytoskeleton. Interacts with integrin alphaV/beta3. Interacts (via Ig-like C2-type domain 2) with FGFR1, FGFR2 and FGFR3. As to quaternary structure, (Microbial infection) Interacts with herpes simplex virus 1/HHV-1, herpes simplex virus 2/HHV-2, and pseudorabies virus/PRV envelope glycoprotein D. Post-translationally, (Microbial infection) Ubiquitinated by CBL following infection by herpes simplex virus 1/HHV-1 and association with HHV-1 envelope glycoprotein D, leading to its removal from cell surface.

The protein localises to the cell membrane. It localises to the cell junction. The protein resides in the adherens junction. It is found in the presynaptic cell membrane. Its subcellular location is the secreted. Its function is as follows. Cell adhesion molecule that promotes cell-cell contacts and plays important roles in the development of the nervous system. Acts by forming homophilic or heterophilic trans-dimers. Heterophilic interactions have been detected between NECTIN1 and NECTIN3 and between NECTIN1 and NECTIN4. Involved in axon guidance by promoting contacts between the commissural axons and the floor plate cells. Involved in synaptogegesis. Has some neurite outgrowth-promoting activity. Promotes formation of checkerboard-like cellular pattern of hair cells and supporting cells in the auditory epithelium via heterophilic interaction with NECTIN3: NECTIN1 is present in the membrane of hair cells and associates with NECTIN3 on supporting cells, thereby mediating heterotypic adhesion between these two cell types. Required for enamel mineralization. (Microbial infection) Acts as a receptor for herpes simplex virus 1/HHV-1, herpes simplex virus 2/HHV-2, and pseudorabies virus/PRV. Constitutes the major receptor for herpes simplex virus 1/HHV-1 entry into host cells. The polypeptide is Nectin-1 (Homo sapiens (Human)).